The chain runs to 382 residues: Carbamoyl phosphate synthase small chain (382 aa).

A CPSase region spans residues 1–189 (MIKSALLVLE…GLPEAKKEDE (189 aa)). L-glutamine-binding residues include S47, G241, and G243. The 188-residue stretch at 193 to 380 (HVVAYDFGAK…IALIEQYRKT (188 aa)) folds into the Glutamine amidotransferase type-1 domain. Catalysis depends on C269, which acts as the Nucleophile. 5 residues coordinate L-glutamine: L270, Q273, N311, G313, and F314. Active-site residues include H353 and E355.

This sequence belongs to the CarA family. In terms of assembly, composed of two chains; the small (or glutamine) chain promotes the hydrolysis of glutamine to ammonia, which is used by the large (or ammonia) chain to synthesize carbamoyl phosphate. Tetramer of heterodimers (alpha,beta)4.

It catalyses the reaction hydrogencarbonate + L-glutamine + 2 ATP + H2O = carbamoyl phosphate + L-glutamate + 2 ADP + phosphate + 2 H(+). The catalysed reaction is L-glutamine + H2O = L-glutamate + NH4(+). It participates in amino-acid biosynthesis; L-arginine biosynthesis; carbamoyl phosphate from bicarbonate: step 1/1. The protein operates within pyrimidine metabolism; UMP biosynthesis via de novo pathway; (S)-dihydroorotate from bicarbonate: step 1/3. In terms of biological role, small subunit of the glutamine-dependent carbamoyl phosphate synthetase (CPSase). CPSase catalyzes the formation of carbamoyl phosphate from the ammonia moiety of glutamine, carbonate, and phosphate donated by ATP, constituting the first step of 2 biosynthetic pathways, one leading to arginine and/or urea and the other to pyrimidine nucleotides. The small subunit (glutamine amidotransferase) binds and cleaves glutamine to supply the large subunit with the substrate ammonia. This chain is Carbamoyl phosphate synthase small chain, found in Escherichia coli O6:H1 (strain CFT073 / ATCC 700928 / UPEC).